Here is a 529-residue protein sequence, read N- to C-terminus: Zinc finger protein 572 (529 aa).

The interval 1 to 125 (MEQEQKLLVS…TGPAGQQNPS (125 aa)) is disordered. Lys6 participates in a covalent cross-link: Glycyl lysine isopeptide (Lys-Gly) (interchain with G-Cter in SUMO2). Residues 22–42 (KNTITGDESKNNLKTVQFSNS) are compositionally biased toward polar residues. A compositionally biased stretch (basic and acidic residues) spans 43-68 (KADKERASKWSRSDGPENYKDEDTKE). Positions 87 to 96 (NDSNLGSQRN) are enriched in polar residues. 12 C2H2-type zinc fingers span residues 131-153 (YKCS…QRTH), 159-181 (YRCS…LRTH), 187-209 (YQCG…ERTH), 215-237 (YKCP…HRSH), 243-265 (YECP…QRTH), 271-293 (YKCP…QRTH), 299-321 (YKCP…QRIH), 327-349 (YQCI…QKMH), 383-405 (YKCC…QRTH), 411-433 (YRCS…QRTH), 439-461 (YKCP…RRTH), and 467-489 (YKCT…RKIH).

It belongs to the krueppel C2H2-type zinc-finger protein family.

Its subcellular location is the nucleus. Functionally, may be involved in transcriptional regulation. This Bos taurus (Bovine) protein is Zinc finger protein 572 (ZNF572).